Reading from the N-terminus, the 203-residue chain is Membrane-spanning 4-domains subfamily A member 13 (203 aa).

The next 4 membrane-spanning stretches (helical) occupy residues 15 to 35 (VLGVIQIMIGIYHVLMWYFLL), 56 to 76 (MGTSLWGFAFVISGAFTVKAA), 84 to 104 (ILCTMSLNILCIIITIVAASL), and 141 to 161 (FAIALLYSISSCAYLPLSSIV).

The protein belongs to the MS4A family.

It localises to the membrane. In terms of biological role, may be involved in signal transduction as a component of a multimeric receptor complex. The polypeptide is Membrane-spanning 4-domains subfamily A member 13 (Ms4a13) (Mus musculus (Mouse)).